The sequence spans 193 residues: Ion-translocating oxidoreductase complex subunit A (193 aa).

Transmembrane regions (helical) follow at residues 5 to 25 (ILLI…FLGL), 39 to 59 (IGMG…AYLV), 72 to 92 (LRTL…EMVI), 102 to 122 (LLGI…VALL), 134 to 154 (VIYG…FAAL), and 171 to 191 (SIAL…SGLV).

Belongs to the NqrDE/RnfAE family. In terms of assembly, the complex is composed of six subunits: RnfA, RnfB, RnfC, RnfD, RnfE and RnfG.

It localises to the cell inner membrane. In terms of biological role, part of a membrane-bound complex that couples electron transfer with translocation of ions across the membrane. In Histophilus somni (strain 2336) (Haemophilus somnus), this protein is Ion-translocating oxidoreductase complex subunit A.